The primary structure comprises 409 residues: S-adenosylmethionine synthase (409 aa).

His-15 is a binding site for ATP. Position 17 (Asp-17) interacts with Mg(2+). Glu-43 serves as a coordination point for K(+). The L-methionine site is built by Glu-56 and Gln-100. The segment at 100-110 (QSSDIAQGVNE) is flexible loop. ATP is bound by residues 171–173 (DGK), 248–249 (KF), Asp-257, 263–264 (RK), Ala-280, and Lys-284. Asp-257 serves as a coordination point for L-methionine. Position 288 (Lys-288) interacts with L-methionine.

Belongs to the AdoMet synthase family. Homotetramer; dimer of dimers. Mg(2+) serves as cofactor. The cofactor is K(+).

The protein resides in the cytoplasm. It carries out the reaction L-methionine + ATP + H2O = S-adenosyl-L-methionine + phosphate + diphosphate. Its pathway is amino-acid biosynthesis; S-adenosyl-L-methionine biosynthesis; S-adenosyl-L-methionine from L-methionine: step 1/1. Functionally, catalyzes the formation of S-adenosylmethionine (AdoMet) from methionine and ATP. The overall synthetic reaction is composed of two sequential steps, AdoMet formation and the subsequent tripolyphosphate hydrolysis which occurs prior to release of AdoMet from the enzyme. This chain is S-adenosylmethionine synthase, found in Prochlorococcus marinus (strain NATL1A).